The chain runs to 94 residues: (2R)-sulfolactate sulfo-lyase subunit alpha (94 aa).

An AFP-like domain is found at 16-90 (VVVVEGVEAG…GEHVHVHNVK (75 aa)).

As to quaternary structure, (2R)-sulfolactate sulfo-lyase is composed of a SuyA and a SuyB subunit.

Its subcellular location is the cytoplasm. The catalysed reaction is (2R)-3-sulfolactate = sulfite + pyruvate + H(+). In terms of biological role, together with SuyB, desulfonates sulfolactate to pyruvate and sulfite. In Chromohalobacter salexigens (strain ATCC BAA-138 / DSM 3043 / CIP 106854 / NCIMB 13768 / 1H11), this protein is (2R)-sulfolactate sulfo-lyase subunit alpha (suyA).